The sequence spans 234 residues: Ribosomal RNA large subunit methyltransferase E (234 aa).

Residues 1 to 37 (MSDDDRRRWKGPGPERQDSGRRSTERKVIARNARTES) are disordered. Residues Gly91, Trp93, Asp109, Asp125, and Asp149 each contribute to the S-adenosyl-L-methionine site. Lys189 acts as the Proton acceptor in catalysis.

Belongs to the class I-like SAM-binding methyltransferase superfamily. RNA methyltransferase RlmE family.

The protein localises to the cytoplasm. It carries out the reaction uridine(2552) in 23S rRNA + S-adenosyl-L-methionine = 2'-O-methyluridine(2552) in 23S rRNA + S-adenosyl-L-homocysteine + H(+). Specifically methylates the uridine in position 2552 of 23S rRNA at the 2'-O position of the ribose in the fully assembled 50S ribosomal subunit. The protein is Ribosomal RNA large subunit methyltransferase E of Hyphomonas neptunium (strain ATCC 15444).